A 329-amino-acid polypeptide reads, in one-letter code: Cathepsin K (329 aa).

The N-terminal stretch at Met1 to Ala15 is a signal peptide. Positions Leu16–Arg114 are cleaved as a propeptide — activation peptide. A glycan (N-linked (GlcNAc...) asparagine) is linked at Asn103. Cystine bridges form between Cys136-Cys177, Cys170-Cys210, and Cys269-Cys318. The active site involves Cys139. Active-site residues include His276 and Asn296.

Belongs to the peptidase C1 family.

It localises to the lysosome. The protein resides in the secreted. It is found in the apical cell membrane. It catalyses the reaction Broad proteolytic activity. With small-molecule substrates and inhibitors, the major determinant of specificity is P2, which is preferably Leu, Met &gt; Phe, and not Arg.. Thiol protease involved in osteoclastic bone resorption and may participate partially in the disorder of bone remodeling. Displays potent endoprotease activity against fibrinogen at acid pH. May play an important role in extracellular matrix degradation. Involved in the release of thyroid hormone thyroxine (T4) by limited proteolysis of TG/thyroglobulin in the thyroid follicle lumen. The chain is Cathepsin K (CTSK) from Bos taurus (Bovine).